Reading from the N-terminus, the 315-residue chain is uncharacterized protein (315 aa).

Residues arginine 296 to proline 308 are compositionally biased toward basic residues. The tract at residues arginine 296–aspartate 315 is disordered.

This sequence belongs to the metallo-dependent hydrolases superfamily. Peptidase M19 family.

This is an uncharacterized protein from Acinetobacter calcoaceticus.